A 414-amino-acid chain; its full sequence is Snake venom metalloproteinase (414 aa).

Positions 1-20 (MIEVLLVTICLAVFPYQGSS) are cleaved as a signal peptide. A propeptide spanning residues 21-190 (IILESGNVND…KASDLNFNSD (170 aa)) is cleaved from the precursor. Pyrrolidone carboxylic acid is present on glutamine 191. A Peptidase M12B domain is found at 197–393 (RYVELVIVAD…YKPQCILNKP (197 aa)). Positions 200 and 284 each coordinate Ca(2+). 2 disulfide bridges follow: cysteine 308–cysteine 388 and cysteine 348–cysteine 355. Histidine 333 provides a ligand contact to Zn(2+). The active site involves glutamate 334. Histidine 337 and histidine 343 together coordinate Zn(2+). 2 residues coordinate Ca(2+): cysteine 388 and asparagine 391. The propeptide occupies 394–414 (LRIDPVSTPVSGNELLEAGEE).

Belongs to the venom metalloproteinase (M12B) family. P-I subfamily. As to quaternary structure, monomer. The cofactor is Zn(2+). Expressed by the venom gland.

It localises to the secreted. Functionally, snake venom metalloproteinase that impairs hemostasis in the envenomed animal. This Crotalus molossus molossus (Northern black-tailed rattlesnake) protein is Snake venom metalloproteinase.